Consider the following 1150-residue polypeptide: PAN2-PAN3 deadenylation complex catalytic subunit pan2 (1150 aa).

2 WD repeats span residues 96–139 (AHEE…DKLH) and 270–309 (ANVSFMLGIDLSPSGEALAINDAECAIHLWGSPAKVHFNE). The segment at 310 to 446 (MSKEAEFGDV…GAKINGETDD (137 aa)) is linker. In terms of domain architecture, USP spans 447–816 (DPLLKYSNVE…IPCVLAYQVQ (370 aa)). The Exonuclease domain occupies 865-1043 (VALDTEFVDL…IEDARMALRL (179 aa)). 4 residues coordinate a divalent metal cation: D868, E870, D977, and D1036. Residues 1074–1150 (PPPRNGVPTV…GDFFSGSPLK (77 aa)) form a disordered region. Positions 1091–1106 (VTMQNNSGRNTPSTSD) are enriched in polar residues. Positions 1108-1120 (AGAAASAPATPRQ) are enriched in low complexity.

Belongs to the peptidase C19 family. PAN2 subfamily. Forms a heterotrimer with an asymmetric homodimer of the regulatory subunit pan3 to form the poly(A)-nuclease (PAN) deadenylation complex. A divalent metal cation serves as cofactor.

The protein localises to the cytoplasm. It carries out the reaction Exonucleolytic cleavage of poly(A) to 5'-AMP.. Its activity is regulated as follows. Positively regulated by the regulatory subunit pan3. Its function is as follows. Catalytic subunit of the poly(A)-nuclease (PAN) deadenylation complex, one of two cytoplasmic mRNA deadenylases involved in mRNA turnover. PAN specifically shortens poly(A) tails of RNA and the activity is stimulated by poly(A)-binding protein pab1. PAN deadenylation is followed by rapid degradation of the shortened mRNA tails by the CCR4-NOT complex. Deadenylated mRNAs are then degraded by two alternative mechanisms, namely exosome-mediated 3'-5' exonucleolytic degradation, or deadenylation-dependent mRNA decaping and subsequent 5'-3' exonucleolytic degradation by xrn1. May also be involved in post-transcriptional maturation of mRNA poly(A) tails. This chain is PAN2-PAN3 deadenylation complex catalytic subunit pan2, found in Aspergillus niger (strain ATCC MYA-4892 / CBS 513.88 / FGSC A1513).